Consider the following 140-residue polypeptide: Small ribosomal subunit protein uS19 (140 aa).

The protein belongs to the universal ribosomal protein uS19 family.

Protein S19 forms a complex with S13 that binds strongly to the 16S ribosomal RNA. The protein is Small ribosomal subunit protein uS19 (rps19) of Saccharolobus solfataricus (strain ATCC 35092 / DSM 1617 / JCM 11322 / P2) (Sulfolobus solfataricus).